The primary structure comprises 629 residues: Phosphomethylpyrimidine synthase (629 aa).

A disordered region spans residues 1 to 20 (MSTTLKNAAHLSESAQVDSG). Residues Asn233, Met262, Tyr291, His327, 347-349 (SRG), 388-391 (DGLR), and Glu427 each bind substrate. His431 provides a ligand contact to Zn(2+). Tyr454 is a binding site for substrate. His495 is a binding site for Zn(2+). The [4Fe-4S] cluster site is built by Cys575, Cys578, and Cys583.

Belongs to the ThiC family. Homodimer. It depends on [4Fe-4S] cluster as a cofactor.

It carries out the reaction 5-amino-1-(5-phospho-beta-D-ribosyl)imidazole + S-adenosyl-L-methionine = 4-amino-2-methyl-5-(phosphooxymethyl)pyrimidine + CO + 5'-deoxyadenosine + formate + L-methionine + 3 H(+). It functions in the pathway cofactor biosynthesis; thiamine diphosphate biosynthesis. In terms of biological role, catalyzes the synthesis of the hydroxymethylpyrimidine phosphate (HMP-P) moiety of thiamine from aminoimidazole ribotide (AIR) in a radical S-adenosyl-L-methionine (SAM)-dependent reaction. The polypeptide is Phosphomethylpyrimidine synthase (Pseudomonas savastanoi pv. phaseolicola (strain 1448A / Race 6) (Pseudomonas syringae pv. phaseolicola (strain 1448A / Race 6))).